The chain runs to 89 residues: MVNHKNVKKMIKAIAKRTLINKMRKSKTRTAIRKLVDIIKSGNKENVTPAFRSAESNLHKCVSKGVIHKNTAARKISRLNAKVKALMTA.

The protein belongs to the bacterial ribosomal protein bS20 family.

Binds directly to 16S ribosomal RNA. The protein is Small ribosomal subunit protein bS20 of Wolbachia sp. subsp. Brugia malayi (strain TRS).